The chain runs to 453 residues: Putative amino acid/polyamine transporter MPH_07630_2 (453 aa).

3 helical membrane passes run 2–21, 30–50, and 81–101; these read IGFS…VLVV, VMIW…YSMA, and VCGW…NFIA. An N-linked (GlcNAc...) asparagine glycan is attached at Asn-110. 2 helical membrane passes run 121–141 and 151–171; these read WHAV…SIFL and AILI…LATN. N-linked (GlcNAc...) asparagine glycosylation is present at Asn-186. 2 helical membrane passes run 193 to 213 and 231 to 251; these read AYAA…YDAP and IVMS…SLCF. Residue Asn-274 is glycosylated (N-linked (GlcNAc...) asparagine). 4 helical membrane passes run 277 to 297, 330 to 350, 358 to 378, and 403 to 423; these read GSVA…LVCA, LGVP…FNSI, FNTV…IPLL, and GLLA…TFNF. The N-linked (GlcNAc...) asparagine glycan is linked to Asn-435.

It belongs to the amino acid-polyamine-organocation (APC) superfamily.

It localises to the membrane. The polypeptide is Putative amino acid/polyamine transporter MPH_07630_2 (Macrophomina phaseolina (strain MS6) (Charcoal rot fungus)).